Here is a 190-residue protein sequence, read N- to C-terminus: Shikimate kinase (190 aa).

Residue 14–19 (GSGKST) participates in ATP binding. Mg(2+) is bound at residue Ser-18. The substrate site is built by Asp-36, Arg-60, and Gly-82. Arg-120 contacts ATP. Arg-147 contributes to the substrate binding site.

This sequence belongs to the shikimate kinase family. Monomer. Mg(2+) serves as cofactor.

It is found in the cytoplasm. It catalyses the reaction shikimate + ATP = 3-phosphoshikimate + ADP + H(+). It functions in the pathway metabolic intermediate biosynthesis; chorismate biosynthesis; chorismate from D-erythrose 4-phosphate and phosphoenolpyruvate: step 5/7. Its function is as follows. Catalyzes the specific phosphorylation of the 3-hydroxyl group of shikimic acid using ATP as a cosubstrate. The sequence is that of Shikimate kinase from Chlorobium phaeobacteroides (strain DSM 266 / SMG 266 / 2430).